Reading from the N-terminus, the 394-residue chain is HORMA domain-containing protein 1 (394 aa).

The 203-residue stretch at 24–226 (HQSLVLVKRL…TPFHIFKVKV (203 aa)) folds into the HORMA domain. The segment covering 253-282 (ILRDKDVEDEQEHYTSDDLDIETKMEEQEK) has biased composition (basic and acidic residues). The tract at residues 253–394 (ILRDKDVEDE…RKFSEPKEHI (142 aa)) is disordered. Residues 288–300 (ELEEPSLVCEEDE) show a composition bias toward acidic residues. Polar residues-rich tracts occupy residues 310–324 (LSIS…VNKT) and 343–352 (KMANGNQPVK). A compositionally biased stretch (basic and acidic residues) spans 362 to 374 (QHESGRIVLHHFD). S376 is modified (phosphoserine). The Nuclear localization signal signature appears at 383–386 (KRRK).

In terms of assembly, interacts with HORMAD2. Interacts with IHO1. Post-translationally, phosphorylated at Ser-377 in a SPO11-dependent manner. In terms of tissue distribution, testis-specific. Over-expressed in carcinomas.

It localises to the nucleus. The protein localises to the chromosome. Plays a key role in meiotic progression. Regulates 3 different functions during meiosis: ensures that sufficient numbers of processed DNA double-strand breaks (DSBs) are available for successful homology search by increasing the steady-state numbers of single-stranded DSB ends. Promotes synaptonemal-complex formation independently of its role in homology search. Plays a key role in the male mid-pachytene checkpoint and the female meiotic prophase checkpoint: required for efficient build-up of ATR activity on unsynapsed chromosome regions, a process believed to form the basis of meiotic silencing of unsynapsed chromatin (MSUC) and meiotic prophase quality control in both sexes. This is HORMA domain-containing protein 1 from Homo sapiens (Human).